A 967-amino-acid polypeptide reads, in one-letter code: Phosphoenolpyruvate carboxylase 2 (967 aa).

At Ser-13 the chain carries Phosphoserine. Catalysis depends on residues His-174 and Lys-602.

This sequence belongs to the PEPCase type 1 family. As to quaternary structure, homotetramer. It depends on Mg(2+) as a cofactor.

Its subcellular location is the cytoplasm. It catalyses the reaction oxaloacetate + phosphate = phosphoenolpyruvate + hydrogencarbonate. The protein operates within photosynthesis; C3 acid pathway. Its activity is regulated as follows. By light-reversible phosphorylation. Functionally, through the carboxylation of phosphoenolpyruvate (PEP) it forms oxaloacetate, a four-carbon dicarboxylic acid source for the tricarboxylic acid cycle. This chain is Phosphoenolpyruvate carboxylase 2 (PEP4), found in Zea mays (Maize).